The following is a 348-amino-acid chain: Lipopolysaccharide heptosyltransferase 2 (348 aa).

This sequence belongs to the glycosyltransferase 9 family.

It catalyses the reaction an L-alpha-D-Hep-(1-&gt;5)-[alpha-Kdo-(2-&gt;4)]-alpha-Kdo-(2-&gt;6)-lipid A + ADP-L-glycero-beta-D-manno-heptose = an L-alpha-D-Hep-(1-&gt;3)-L-alpha-D-Hep-(1-&gt;5)-[alpha-Kdo-(2-&gt;4)]-alpha-Kdo-(2-&gt;6)-lipid A + ADP + H(+). The enzyme catalyses L-alpha-D-Hep-(1-&gt;5)-[alpha-Kdo-(2-&gt;4)]-alpha-Kdo-(2-&gt;6)-lipid A (E. coli) + ADP-L-glycero-beta-D-manno-heptose = L-alpha-D-Hep-(1-&gt;3)-L-alpha-D-Hep-(1-&gt;5)-[alpha-Kdo-(2-&gt;4)]-alpha-Kdo-(2-&gt;6)-lipid A (E. coli) + ADP + H(+). The protein operates within bacterial outer membrane biogenesis; LPS core biosynthesis. Its function is as follows. Glycosyltransferase involved in the biosynthesis of the core oligosaccharide region of lipopolysaccharide (LPS). Catalyzes the addition of the second heptose unit to the heptosyl-Kdo2-lipid A module. The analog ADP-mannose can serve as an alternative donor in place of ADP-L-glycero-D-manno-heptose, but with lower efficiency. This Escherichia coli (strain K12) protein is Lipopolysaccharide heptosyltransferase 2.